Reading from the N-terminus, the 103-residue chain is Co-chaperonin GroES (103 aa).

This sequence belongs to the GroES chaperonin family. Heptamer of 7 subunits arranged in a ring. Interacts with the chaperonin GroEL.

It is found in the cytoplasm. Together with the chaperonin GroEL, plays an essential role in assisting protein folding. The GroEL-GroES system forms a nano-cage that allows encapsulation of the non-native substrate proteins and provides a physical environment optimized to promote and accelerate protein folding. GroES binds to the apical surface of the GroEL ring, thereby capping the opening of the GroEL channel. The sequence is that of Co-chaperonin GroES from Parasynechococcus marenigrum (strain WH8102).